A 189-amino-acid polypeptide reads, in one-letter code: Selenoprotein S (189 aa).

Residues 29–49 traverse the membrane as a helical segment; sequence VVLSSYGWYILLGCILIYLLI. Positions 114–125 are enriched in basic and acidic residues; it reads IETWDRMKEGKS. Residues 114–189 are disordered; it reads IETWDRMKEG…RRGPSSGGUG (76 aa). Low complexity predominate over residues 136 to 147; that stretch reads PSPSTSTSAATK. A compositionally biased stretch (basic and acidic residues) spans 148-157; sequence PKQEKQERKT. Sec-188 is a non-standard amino acid (selenocysteine).

The protein belongs to the selenoprotein S family.

It localises to the endoplasmic reticulum membrane. The protein resides in the cytoplasm. Its function is as follows. Involved in the degradation process of misfolded endoplasmic reticulum (ER) luminal proteins. Participates in the transfer of misfolded proteins from the ER to the cytosol, where they are destroyed by the proteasome in a ubiquitin-dependent manner. The chain is Selenoprotein S (vimp) from Xenopus tropicalis (Western clawed frog).